Reading from the N-terminus, the 247-residue chain is Uridylate kinase (247 aa).

Residue 18 to 21 coordinates ATP; it reads KLSG. A UMP-binding site is contributed by glycine 60. Residues glycine 61 and arginine 65 each contribute to the ATP site. UMP contacts are provided by residues aspartate 80 and 141-148; that span reads TGNPFFTT. The ATP site is built by threonine 168, tyrosine 174, and aspartate 177.

The protein belongs to the UMP kinase family. Homohexamer.

It is found in the cytoplasm. It catalyses the reaction UMP + ATP = UDP + ADP. It participates in pyrimidine metabolism; CTP biosynthesis via de novo pathway; UDP from UMP (UMPK route): step 1/1. With respect to regulation, inhibited by UTP. Catalyzes the reversible phosphorylation of UMP to UDP. The polypeptide is Uridylate kinase (Ectopseudomonas mendocina (strain ymp) (Pseudomonas mendocina)).